Here is a 128-residue protein sequence, read N- to C-terminus: Sulfurtransferase TusD (128 aa).

Cysteine 78 acts as the Cysteine persulfide intermediate in catalysis.

This sequence belongs to the DsrE/TusD family. In terms of assembly, heterohexamer, formed by a dimer of trimers. The hexameric TusBCD complex contains 2 copies each of TusB, TusC and TusD. The TusBCD complex interacts with TusE.

It is found in the cytoplasm. In terms of biological role, part of a sulfur-relay system required for 2-thiolation of 5-methylaminomethyl-2-thiouridine (mnm(5)s(2)U) at tRNA wobble positions. Accepts sulfur from TusA and transfers it in turn to TusE. This Salmonella dublin (strain CT_02021853) protein is Sulfurtransferase TusD.